The sequence spans 279 residues: Zinc finger CCCH domain-containing protein 1 (279 aa).

The tract at residues 20-45 (DVIVLSPGPPARRRPPPVKAVEPESG) is disordered. C3H1-type zinc fingers lie at residues 56–84 (FYKT…HGDE) and 139–167 (RAIT…HVSA).

This Oryza sativa subsp. japonica (Rice) protein is Zinc finger CCCH domain-containing protein 1.